The primary structure comprises 359 residues: Heme A synthase (359 aa).

5 helical membrane-spanning segments follow: residues 8–28 (IMSI…VVGG), 94–114 (LLGR…YYLK), 124–144 (LLLI…MVKS), 159–179 (GHLL…LIII), and 215–235 (IIIF…GLDA). Residue His274 coordinates heme. The next 3 membrane-spanning stretches (helical) occupy residues 276–296 (WFGI…IILN), 303–323 (MGMV…ITLV), and 328–348 (ILAA…FLFI). Residue His334 coordinates heme.

This sequence belongs to the COX15/CtaA family. Type 2 subfamily. Interacts with CtaB. The cofactor is heme b.

It localises to the cell membrane. The enzyme catalyses Fe(II)-heme o + 2 A + H2O = Fe(II)-heme a + 2 AH2. It functions in the pathway porphyrin-containing compound metabolism; heme A biosynthesis; heme A from heme O: step 1/1. Its function is as follows. Catalyzes the conversion of heme O to heme A by two successive hydroxylations of the methyl group at C8. The first hydroxylation forms heme I, the second hydroxylation results in an unstable dihydroxymethyl group, which spontaneously dehydrates, resulting in the formyl group of heme A. The protein is Heme A synthase of Orientia tsutsugamushi (strain Ikeda) (Rickettsia tsutsugamushi).